The following is a 264-amino-acid chain: Protein FAM228B (264 aa).

This sequence belongs to the FAM228 family.

In Bos taurus (Bovine), this protein is Protein FAM228B (FAM228B).